Here is a 1090-residue protein sequence, read N- to C-terminus: Leucine-rich repeat receptor-like serine/threonine-protein kinase RGI4 (1090 aa).

The signal sequence occupies residues 1 to 20 (MPRNPRFCFFLFLLFHSSLF). The Extracellular portion of the chain corresponds to 21–702 (FSIPCFSIDE…IQTRHRSAVK (682 aa)). One copy of the LRR 1 repeat lies at 36-59 (LSWKSQLNISGDALSSWKASESNP). Asparagine 43 carries N-linked (GlcNAc...) asparagine glycosylation. Cysteines 60 and 67 form a disulfide. LRR repeat units follow at residues 95–119 (IKSL…LGDL), 120–143 (SELE…IFKL), 145–166 (KLKI…ELGN), and 168–191 (VNLI…IGEL). Asparagine 107 carries an N-linked (GlcNAc...) asparagine glycan. Short sequence motifs (small peptide recognition) lie at residues 176–177 (FD), 198–201 (RAGG), 221–226 (TLGLAE), and tyrosine 249. 7 LRR repeats span residues 216-240 (CESL…IGNL), 242-264 (KVQT…IGNC), 265-288 (TELQ…MGRL), 289-312 (KKLQ…LGTC), 314-335 (ELFL…SFGN), 336-360 (LPNL…LANC), and 362-386 (KLTH…KLTS). N-linked (GlcNAc...) asparagine glycosylation is present at asparagine 263. The short motif at 269–273 (NLYLY) is the CLE45 peptide binding element. The Small peptide recognition signature appears at 271-273 (YLY). Short sequence motifs (small peptide recognition) lie at residues 319–322 (DLSE) and 341–343 (ELQ). Asparagine 359 carries an N-linked (GlcNAc...) asparagine glycan. 2 consecutive short sequence motifs (small peptide recognition) follow at residues 389–393 (MFFAW) and 415–418 (DLSY). 11 LRR repeats span residues 408 to 432 (CQEL…IFEI), 434 to 456 (NLTK…IGNC), 457 to 480 (TNLY…IGNL), 481 to 504 (KNLN…ISGC), 506 to 526 (SLEF…GTLP), 527 to 550 (KSLQ…IGSL), 551 to 574 (TELT…ISSC), 576 to 598 (SLQL…LGRI), 600 to 622 (SLAI…RFSS), 623 to 646 (LTNL…LADL), and 647 to 670 (QNLV…LFFR). Asparagine 420 and asparagine 434 each carry an N-linked (GlcNAc...) asparagine glycan. The Small peptide recognition motif lies at 437–441 (KLLLL). N-linked (GlcNAc...) asparagine glycosylation occurs at asparagine 455. The Small peptide recognition motif lies at 461-463 (RLR). Asparagine 606 carries N-linked (GlcNAc...) asparagine glycosylation. N-linked (GlcNAc...) asparagine glycosylation occurs at asparagine 653. A helical membrane pass occupies residues 703-723 (VTMSILVAASVVLVLMAVYTL). At 724–1090 (VKAQRITGKQ…CSFAYSDESV (367 aa)) the chain is on the cytoplasmic side. The Protein kinase domain maps to 758–1040 (LTSANVIGTG…KDIVAMLKEI (283 aa)). ATP-binding positions include 764-772 (IGTGSSGVV) and lysine 786. Phosphotyrosine occurs at positions 829 and 869. Aspartate 882 serves as the catalytic Proton acceptor. Residue tyrosine 932 is modified to Phosphotyrosine. The stretch at 1037 to 1060 (LKEIRQFDMDRSESDMIKGGKCEK) is one LRR 24 repeat. Residues 1054–1079 (KGGKCEKWQPQPLPPEKIVSTPRGSS) form a disordered region.

It belongs to the protein kinase superfamily. Ser/Thr protein kinase family. As to quaternary structure, self-interacts. Interacts with RGF1; this interaction triggers its phosphorylation and ubiquitination and the formation of heterodimers with SERK1. In terms of processing, autophosphorylated. Phosphorylated and ubiquitinated upon interaction with RGF1, thus leading to activation a subsequent degradation. Expressed in floers, pollen grains and stipules. Present in roots.

It localises to the cell membrane. It carries out the reaction L-seryl-[protein] + ATP = O-phospho-L-seryl-[protein] + ADP + H(+). It catalyses the reaction L-threonyl-[protein] + ATP = O-phospho-L-threonyl-[protein] + ADP + H(+). Its function is as follows. Receptor with a serine/threonine-protein kinase activity. Together with SKM1, LRR-rich receptor-like kinase (LRR-RLK) required for male fertility by the perception of CLE43 and CLE45 peptides and the transduction of their promoting action in pollen tubes, especially under relatively high temperature (at 30 degrees Celsius), thus conferring tolerance against high temperature probably through the maintenance of mitochondrial activity. Seems to not be involved in the perception of CLE45 peptide in roots. Together with RGI1, RGI2, RGI3, RGI4 and RGI5, acts as receptor of RGF1, a peptide hormone that maintains the postembryonic root stem cell niche by regulating the expression levels and patterns of the transcription factor PLETHORA (PLT). Links RGF1 signal with its downstream components. This is Leucine-rich repeat receptor-like serine/threonine-protein kinase RGI4 from Arabidopsis thaliana (Mouse-ear cress).